The sequence spans 347 residues: Melatonin receptor type 1B-B (347 aa).

Over 1-36 the chain is Extracellular; it reads MPENIAFLTNSTDLGHVGRALGSSARPAWAIAVLAS. N10 is a glycosylation site (N-linked (GlcNAc...) asparagine). A helical transmembrane segment spans residues 37–57; that stretch reads VLIFTTVVDVLGNLLVIISVF. Residues 58 to 72 lie on the Cytoplasmic side of the membrane; it reads RNRKLRNAGNVFVVS. A helical transmembrane segment spans residues 73-93; the sequence is LAFADLVVAFYPYPLVLYAIF. The Extracellular portion of the chain corresponds to 94–105; that stretch reads HDGWSLGETQCK. A disulfide bond links C104 and C181. A helical membrane pass occupies residues 106–126; the sequence is ISGFLMGLSVIGSVFNITGIA. The Cytoplasmic segment spans residues 127-148; it reads INRYCYICHSFAYGRLYSFRNT. Residues 149-169 form a helical membrane-spanning segment; the sequence is LLLVALIWALTVLAILPNFFV. Residues 170–191 lie on the Extracellular side of the membrane; sequence GSLSYDPRVYSCTFTQTASSSY. The chain crosses the membrane as a helical span at residues 192 to 212; that stretch reads TVVVVVVHFLVPIAVVTFCYL. Residues 213–244 lie on the Cytoplasmic side of the membrane; the sequence is RIWVLVIQVRRKVKSEERSRVRPSDLRNFVTM. Residues 245 to 265 form a helical membrane-spanning segment; the sequence is FVVFVLFAICWAPLNLIGLVV. Over 266–278 the chain is Extracellular; sequence AINPEVMAPRVPE. A helical membrane pass occupies residues 279–299; it reads WLFVVSYFMAYFNSCLNAIIY. Residues 300–347 are Cytoplasmic-facing; sequence GLLNRNFRKEYVRIMTAVWIPRRFVTETSRAATDGMRSKPSPAINNNE.

The protein belongs to the G-protein coupled receptor 1 family.

The protein resides in the cell membrane. High affinity receptor for melatonin. The activity of this receptor is mediated by pertussis toxin sensitive G proteins that inhibits adenylate cyclase activity. In Danio rerio (Zebrafish), this protein is Melatonin receptor type 1B-B (mtnr1bb).